Here is a 260-residue protein sequence, read N- to C-terminus: Small ribosomal subunit protein uS3 (260 aa).

Residues 39-114 (LRQYIEQKLG…QIRINVVEVQ (76 aa)) form the KH type-2 domain. The segment at 218-260 (QEVATPPPSPRDRDRDRGDRDREPRRRQQQRRRQQFEDRSNEG) is disordered. Basic and acidic residues-rich tracts occupy residues 227–243 (PRDR…EPRR) and 251–260 (QQFEDRSNEG).

Belongs to the universal ribosomal protein uS3 family. Part of the 30S ribosomal subunit. Forms a tight complex with proteins S10 and S14.

Functionally, binds the lower part of the 30S subunit head. Binds mRNA in the 70S ribosome, positioning it for translation. This Nostoc sp. (strain PCC 7120 / SAG 25.82 / UTEX 2576) protein is Small ribosomal subunit protein uS3.